Reading from the N-terminus, the 494-residue chain is MNAPVKPSHLIKGATGEWEMVIGIEVHAQVTSNAKLFSGASTAFGGDPNSHVSLVDAAMPGMLPVINEECVRQAVRTGLGLNARINLRSVFDRKNYFYPDLPQGYQISQYKSPIVGEGEVVVDLADGTSFVVGIERLHLEQDAGKSLHDQHADMSAIDLNRSGVALMEIVSRPDMRSSEQARAYVTKLRTILRYLGTCDGDMEKGNLRADVNVSVRRPGEPFGTRCEIKNVNSIRFIGQAIEYEARRQIGILEDGGGIDQETRLFDPDKGETRAMRSKEEAHDYRYFPDPDLLPLEFSQGLVDALKADLPELPDQKKARFVTDLGLTSYDAAVLVSEHESANFYESVLADLADARRDGKAAANWVINELFGRLNKQGLSIEASPVSASQLAAIIDLIGEGTISGKIAKDLFEIVWSEGGDPRALVEARGMKQVTDVGAIEKVVDDIVAANPDKVAQVRAKPQMIGWFVGQVMKASGGKVNPQAVNDLLKAKLGL.

Belongs to the GatB/GatE family. GatB subfamily. Heterotrimer of A, B and C subunits.

It catalyses the reaction L-glutamyl-tRNA(Gln) + L-glutamine + ATP + H2O = L-glutaminyl-tRNA(Gln) + L-glutamate + ADP + phosphate + H(+). The enzyme catalyses L-aspartyl-tRNA(Asn) + L-glutamine + ATP + H2O = L-asparaginyl-tRNA(Asn) + L-glutamate + ADP + phosphate + 2 H(+). In terms of biological role, allows the formation of correctly charged Asn-tRNA(Asn) or Gln-tRNA(Gln) through the transamidation of misacylated Asp-tRNA(Asn) or Glu-tRNA(Gln) in organisms which lack either or both of asparaginyl-tRNA or glutaminyl-tRNA synthetases. The reaction takes place in the presence of glutamine and ATP through an activated phospho-Asp-tRNA(Asn) or phospho-Glu-tRNA(Gln). The polypeptide is Aspartyl/glutamyl-tRNA(Asn/Gln) amidotransferase subunit B (Nitrobacter winogradskyi (strain ATCC 25391 / DSM 10237 / CIP 104748 / NCIMB 11846 / Nb-255)).